The primary structure comprises 81 residues: Prophage excisionase-like protein (81 aa).

This sequence to lambdoid phages excisionases.

The chain is Prophage excisionase-like protein (xisE) from Escherichia coli (strain K12).